A 607-amino-acid chain; its full sequence is Glutamine--fructose-6-phosphate aminotransferase [isomerizing] (607 aa).

Residue Cys2 is the Nucleophile; for GATase activity of the active site. The Glutamine amidotransferase type-2 domain occupies 2–218; sequence CGIIGYSGSK…DGDVVLVTKD (217 aa). SIS domains are found at residues 280-424 and 457-597; these read FDEQ…KLGK and IAKK…VDKP. The For Fru-6P isomerization activity role is filled by Lys602.

In terms of assembly, homodimer.

Its subcellular location is the cytoplasm. The enzyme catalyses D-fructose 6-phosphate + L-glutamine = D-glucosamine 6-phosphate + L-glutamate. In terms of biological role, catalyzes the first step in hexosamine metabolism, converting fructose-6P into glucosamine-6P using glutamine as a nitrogen source. This Fusobacterium nucleatum subsp. nucleatum (strain ATCC 25586 / DSM 15643 / BCRC 10681 / CIP 101130 / JCM 8532 / KCTC 2640 / LMG 13131 / VPI 4355) protein is Glutamine--fructose-6-phosphate aminotransferase [isomerizing].